The primary structure comprises 59 residues: Large ribosomal subunit protein bL35 (59 aa).

Disordered stretches follow at residues 1–22 (MKVKSAAKKRFKLTKSGQIKRK) and 30–49 (APHKTTKQKRHLRKQGTVSA). Residues 30-43 (APHKTTKQKRHLRK) are compositionally biased toward basic residues.

Belongs to the bacterial ribosomal protein bL35 family.

The protein is Large ribosomal subunit protein bL35 (rpmI) of Mycoplasma pneumoniae (strain ATCC 29342 / M129 / Subtype 1) (Mycoplasmoides pneumoniae).